The primary structure comprises 67 residues: Large ribosomal subunit protein bL31 (67 aa).

Cys-16, Cys-18, Cys-36, and Cys-39 together coordinate Zn(2+).

The protein belongs to the bacterial ribosomal protein bL31 family. Type A subfamily. In terms of assembly, part of the 50S ribosomal subunit. The cofactor is Zn(2+).

In terms of biological role, binds the 23S rRNA. The sequence is that of Large ribosomal subunit protein bL31 from Desulforudis audaxviator (strain MP104C).